We begin with the raw amino-acid sequence, 104 residues long: Increased recombination centers protein 13 (104 aa).

The chain crosses the membrane as a helical span at residues 63–83 (LVHLFSYVFFLFLLKICVDVL).

It is found in the membrane. Functionally, may be involved in a pathway contributing to genomic integrity. This chain is Increased recombination centers protein 13 (IRC13), found in Saccharomyces cerevisiae (strain ATCC 204508 / S288c) (Baker's yeast).